Reading from the N-terminus, the 178-residue chain is ATP-dependent protease subunit HslV (178 aa).

The active site involves T5. 3 residues coordinate Na(+): G161, C164, and T167.

It belongs to the peptidase T1B family. HslV subfamily. As to quaternary structure, a double ring-shaped homohexamer of HslV is capped on each side by a ring-shaped HslU homohexamer. The assembly of the HslU/HslV complex is dependent on binding of ATP.

It localises to the cytoplasm. It carries out the reaction ATP-dependent cleavage of peptide bonds with broad specificity.. Allosterically activated by HslU binding. Its function is as follows. Protease subunit of a proteasome-like degradation complex believed to be a general protein degrading machinery. The protein is ATP-dependent protease subunit HslV of Aliarcobacter butzleri (strain RM4018) (Arcobacter butzleri).